Consider the following 333-residue polypeptide: Beta-ketoacyl-[acyl-carrier-protein] synthase III (333 aa).

Residues C114 and H255 contribute to the active site. The ACP-binding stretch occupies residues 256–260 (QANYR). N285 is an active-site residue.

It belongs to the thiolase-like superfamily. FabH family. As to quaternary structure, homodimer.

The protein resides in the cytoplasm. It catalyses the reaction malonyl-[ACP] + acetyl-CoA + H(+) = 3-oxobutanoyl-[ACP] + CO2 + CoA. It functions in the pathway lipid metabolism; fatty acid biosynthesis. Functionally, catalyzes the condensation reaction of fatty acid synthesis by the addition to an acyl acceptor of two carbons from malonyl-ACP. Catalyzes the first condensation reaction which initiates fatty acid synthesis and may therefore play a role in governing the total rate of fatty acid production. Possesses both acetoacetyl-ACP synthase and acetyl transacylase activities. Its substrate specificity determines the biosynthesis of branched-chain and/or straight-chain of fatty acids. The sequence is that of Beta-ketoacyl-[acyl-carrier-protein] synthase III from Aliarcobacter butzleri (strain RM4018) (Arcobacter butzleri).